The primary structure comprises 577 residues: MSANQNPSVQEVLGEVLGPWSDNERLKRESHFLRGTIEQDLQDRITGGFTADNFQLIRFHGMYQQDDRDIRAERSKQKLEPLHNVMLRARMPGGIITPHQWLAIDKFATEHTLYGSIRLTTRQTFQFHGVLKPNIKLMHQTLNSIGIDSIATAGDVNRNVLCTSNPVESELHLQAYEWAKKISEHLLPKTRAYAEIWLDGEKIEGPDEEPILGSNYLPRKFKTTVVIPPHNDVDVHANDLNFVAIGENGQLVGFNVLVGGGLAMTHGDTSTYPRRADDFGFIPLEKTLEVAAAVVSTQRDWGNRSNRKNAKTKYTLDRVGVEVFKAEVEKRAGITFAPSRAYEFTSRGDRIGWVEGIDGKHHLTLFIENGRILDFPGKPLKTGVAEIAKVHQGDFRMTANQNLIVAGVPADQKPHIEQLAREHGLIDDGVSEQRINSMACVAFPTCPLAMAEAERFLPSFVTEVEGILAKHALPKEENIILRVTGCPNGCGRAMLAEIGLVGKAPGRYNLHLGGNRNGTRIPKMYKENITDTQILQEIDELVGRWASERLDGEGFGDFTIRAGIIEEVIISKRDFYA.

The [4Fe-4S] cluster site is built by Cys440, Cys446, Cys486, and Cys490. Cys490 lines the siroheme pocket.

This sequence belongs to the nitrite and sulfite reductase 4Fe-4S domain family. Alpha(8)-beta(8). The alpha component is a flavoprotein, the beta component is a hemoprotein. Requires siroheme as cofactor. [4Fe-4S] cluster serves as cofactor.

The enzyme catalyses hydrogen sulfide + 3 NADP(+) + 3 H2O = sulfite + 3 NADPH + 4 H(+). It functions in the pathway sulfur metabolism; hydrogen sulfide biosynthesis; hydrogen sulfide from sulfite (NADPH route): step 1/1. Component of the sulfite reductase complex that catalyzes the 6-electron reduction of sulfite to sulfide. This is one of several activities required for the biosynthesis of L-cysteine from sulfate. This is Sulfite reductase [NADPH] hemoprotein beta-component from Vibrio cholerae serotype O1 (strain ATCC 39315 / El Tor Inaba N16961).